A 524-amino-acid polypeptide reads, in one-letter code: Cytochrome P450 monooxygenase oblB (524 aa).

A run of 3 helical transmembrane segments spans residues 18 to 38 (ILNA…GLVI), 225 to 245 (FHSG…IHLI), and 322 to 342 (VLIG…VYYI). C466 contributes to the heme binding site.

Belongs to the cytochrome P450 family. Requires heme as cofactor.

The protein localises to the membrane. It catalyses the reaction ophiobolin F + 4 reduced [NADPH--hemoprotein reductase] + 4 O2 = ophiobolin C + 4 oxidized [NADPH--hemoprotein reductase] + 6 H2O + 4 H(+). The protein operates within secondary metabolite biosynthesis; terpenoid biosynthesis. Functionally, cytochrome P450 monooxygenase; part of the gene cluster that mediates the biosynthesis of the sesterterpenes ophiobolins, fungal phytotoxins with potential anti-cancer activities. The first step of the pathway is performed by the sesterterpene synthase oblA that possesses both prenyl transferase and terpene cyclase activity, converting isopentenyl diphosphate and dimethylallyl diphosphate into geranylfarnesyl diphosphate (GFPP) and further converting GFPP into ophiobolin F, respectively. Other sesterterpenoids (C(25) terpenoids) are found as minor products of oblA. The cytochrome P450 monooxygenase oblB then catalyzes a four-step oxidative transformation of ophiobolin F to yield ophiobolin C. The FAD-dependent oxidoreductase oblC might be involved in a later oxidation step that produces ophiobolin A. This chain is Cytochrome P450 monooxygenase oblB, found in Cochliobolus heterostrophus (strain C5 / ATCC 48332 / race O) (Southern corn leaf blight fungus).